Consider the following 388-residue polypeptide: Alanine racemase 2 (388 aa).

Lys-39 acts as the Proton acceptor; specific for D-alanine in catalysis. An N6-(pyridoxal phosphate)lysine modification is found at Lys-39. Residue Arg-137 participates in substrate binding. Tyr-267 (proton acceptor; specific for L-alanine) is an active-site residue. Met-315 is a substrate binding site.

The protein belongs to the alanine racemase family. The cofactor is pyridoxal 5'-phosphate.

It carries out the reaction L-alanine = D-alanine. It functions in the pathway amino-acid biosynthesis; D-alanine biosynthesis; D-alanine from L-alanine: step 1/1. Catalyzes the interconversion of L-alanine and D-alanine. May also act on other amino acids. The sequence is that of Alanine racemase 2 (alr2) from Caldanaerobacter subterraneus subsp. tengcongensis (strain DSM 15242 / JCM 11007 / NBRC 100824 / MB4) (Thermoanaerobacter tengcongensis).